Here is a 376-residue protein sequence, read N- to C-terminus: Phytanoyl-CoA hydroxylase-interacting protein-like (376 aa).

Ser-12 and Ser-15 each carry phosphoserine. N-linked (GlcNAc...) asparagine glycosylation occurs at Asn-23. Ser-25 carries the phosphoserine modification. Asn-37 carries an N-linked (GlcNAc...) asparagine glycan. A Fibronectin type-III domain is found at 52–161; the sequence is VPHNIKISNI…EIIEFCTADY (110 aa).

It belongs to the PHYHIP family.

May play a role in the development of the central system. In Homo sapiens (Human), this protein is Phytanoyl-CoA hydroxylase-interacting protein-like (PHYHIPL).